The primary structure comprises 75 residues: ATP synthase subunit c (75 aa).

2 helical membrane passes run 13-33 and 55-75; these read LSVI…GILF and FIGL…ALII.

It belongs to the ATPase C chain family. As to quaternary structure, F-type ATPases have 2 components, F(1) - the catalytic core - and F(0) - the membrane proton channel. F(1) has five subunits: alpha(3), beta(3), gamma(1), delta(1), epsilon(1). F(0) has three main subunits: a(1), b(2) and c(10-14). The alpha and beta chains form an alternating ring which encloses part of the gamma chain. F(1) is attached to F(0) by a central stalk formed by the gamma and epsilon chains, while a peripheral stalk is formed by the delta and b chains.

Its subcellular location is the cell membrane. Functionally, f(1)F(0) ATP synthase produces ATP from ADP in the presence of a proton or sodium gradient. F-type ATPases consist of two structural domains, F(1) containing the extramembraneous catalytic core and F(0) containing the membrane proton channel, linked together by a central stalk and a peripheral stalk. During catalysis, ATP synthesis in the catalytic domain of F(1) is coupled via a rotary mechanism of the central stalk subunits to proton translocation. In terms of biological role, key component of the F(0) channel; it plays a direct role in translocation across the membrane. A homomeric c-ring of between 10-14 subunits forms the central stalk rotor element with the F(1) delta and epsilon subunits. The sequence is that of ATP synthase subunit c from Bifidobacterium longum (strain DJO10A).